A 144-amino-acid chain; its full sequence is MAASKVKQDMPPPGGYGPIDYKRNLPRRGLSGYSMFAVGIGALIFGYWRMMRWNQERRRLLIEDLEARIALMPLFQAEKDRRTLQILRENLEEEAIIMKDVPNWKVGESVFHTTRWVPPLIGEMYGLRTKEEMSNANFGFTWYT.

Ala2 carries the N-acetylalanine modification. Residues 30–51 traverse the membrane as a helical segment; that stretch reads LSGYSMFAVGIGALIFGYWRMM.

It belongs to the complex I NDUFA13 subunit family. Complex I is composed of 45 different subunits. Interacts with CARD15, but not with CARD4. Interacts with STAT3, but not with STAT1, STAT2 and STAT5A. Interacts with OLFM4.

It is found in the mitochondrion inner membrane. It localises to the nucleus. In terms of biological role, accessory subunit of the mitochondrial membrane respiratory chain NADH dehydrogenase (Complex I), that is believed not to be involved in catalysis. Complex I functions in the transfer of electrons from NADH to the respiratory chain. The immediate electron acceptor for the enzyme is believed to be ubiquinone. Involved in the interferon/all-trans-retinoic acid (IFN/RA) induced cell death. This apoptotic activity is inhibited by interaction with viral IRF1. Prevents the transactivation of STAT3 target genes. May play a role in CARD15-mediated innate mucosal responses and serve to regulate intestinal epithelial cell responses to microbes. The protein is NADH dehydrogenase [ubiquinone] 1 alpha subcomplex subunit 13 (Ndufa13) of Mus musculus (Mouse).